Here is a 590-residue protein sequence, read N- to C-terminus: Aspartate--tRNA(Asp/Asn) ligase (590 aa).

L-aspartate is bound at residue E175. Residues 199 to 202 (QQYK) form an aspartate region. Positions 221 and 450 each coordinate L-aspartate. Residue 221–223 (RDE) participates in ATP binding. Residue E484 participates in ATP binding. R491 is a binding site for L-aspartate. Residue 536-539 (GIDR) participates in ATP binding.

Belongs to the class-II aminoacyl-tRNA synthetase family. Type 1 subfamily. As to quaternary structure, homodimer.

It localises to the cytoplasm. The enzyme catalyses tRNA(Asx) + L-aspartate + ATP = L-aspartyl-tRNA(Asx) + AMP + diphosphate. Functionally, aspartyl-tRNA synthetase with relaxed tRNA specificity since it is able to aspartylate not only its cognate tRNA(Asp) but also tRNA(Asn). Reaction proceeds in two steps: L-aspartate is first activated by ATP to form Asp-AMP and then transferred to the acceptor end of tRNA(Asp/Asn). The chain is Aspartate--tRNA(Asp/Asn) ligase from Azorhizobium caulinodans (strain ATCC 43989 / DSM 5975 / JCM 20966 / LMG 6465 / NBRC 14845 / NCIMB 13405 / ORS 571).